The sequence spans 194 residues: Ribosomal RNA large subunit methyltransferase E (194 aa).

G48, W50, D66, N82, and D110 together coordinate S-adenosyl-L-methionine. The Proton acceptor role is filled by K150.

It belongs to the class I-like SAM-binding methyltransferase superfamily. RNA methyltransferase RlmE family.

It localises to the cytoplasm. It catalyses the reaction uridine(2552) in 23S rRNA + S-adenosyl-L-methionine = 2'-O-methyluridine(2552) in 23S rRNA + S-adenosyl-L-homocysteine + H(+). Its function is as follows. Specifically methylates the uridine in position 2552 of 23S rRNA at the 2'-O position of the ribose in the fully assembled 50S ribosomal subunit. The sequence is that of Ribosomal RNA large subunit methyltransferase E from Picrophilus torridus (strain ATCC 700027 / DSM 9790 / JCM 10055 / NBRC 100828 / KAW 2/3).